The primary structure comprises 212 residues: tRNA (guanine-N(7)-)-methyltransferase (212 aa).

Positions 44, 69, 96, and 118 each coordinate S-adenosyl-L-methionine. Aspartate 118 is an active-site residue. Lysine 122 contributes to the substrate binding site. The tract at residues 124 to 129 (RHEKRR) is interaction with RNA. Substrate is bound by residues aspartate 154 and 192-195 (TEYE).

This sequence belongs to the class I-like SAM-binding methyltransferase superfamily. TrmB family.

The catalysed reaction is guanosine(46) in tRNA + S-adenosyl-L-methionine = N(7)-methylguanosine(46) in tRNA + S-adenosyl-L-homocysteine. The protein operates within tRNA modification; N(7)-methylguanine-tRNA biosynthesis. In terms of biological role, catalyzes the formation of N(7)-methylguanine at position 46 (m7G46) in tRNA. The protein is tRNA (guanine-N(7)-)-methyltransferase of Pediococcus pentosaceus (strain ATCC 25745 / CCUG 21536 / LMG 10740 / 183-1w).